A 481-amino-acid polypeptide reads, in one-letter code: NADH-quinone oxidoreductase subunit N (481 aa).

13 helical membrane-spanning segments follow: residues 14–34, 38–57, 76–96, 108–128, 162–182, 204–224, 235–255, 272–292, 297–317, 323–343, 369–389, 403–423, and 449–469; these read LILS…GDGF, IGWG…TGPA, FAKL…PGFF, PVLI…GDLL, FVLG…LYGF, MFGM…VPFH, PTPV…ALLL, IVVF…IGQT, LLAY…AAGS, ATMT…ICVL, LAAA…LFGF, GFWP…FYYL, and GLIT…IPLL.

Belongs to the complex I subunit 2 family. As to quaternary structure, NDH-1 is composed of 14 different subunits. Subunits NuoA, H, J, K, L, M, N constitute the membrane sector of the complex.

It localises to the cell inner membrane. The enzyme catalyses a quinone + NADH + 5 H(+)(in) = a quinol + NAD(+) + 4 H(+)(out). NDH-1 shuttles electrons from NADH, via FMN and iron-sulfur (Fe-S) centers, to quinones in the respiratory chain. The immediate electron acceptor for the enzyme in this species is believed to be ubiquinone. Couples the redox reaction to proton translocation (for every two electrons transferred, four hydrogen ions are translocated across the cytoplasmic membrane), and thus conserves the redox energy in a proton gradient. This is NADH-quinone oxidoreductase subunit N from Rhizorhabdus wittichii (strain DSM 6014 / CCUG 31198 / JCM 15750 / NBRC 105917 / EY 4224 / RW1) (Sphingomonas wittichii).